Reading from the N-terminus, the 88-residue chain is Large ribosomal subunit protein bL27 (88 aa).

The interval 1–21 is disordered; it reads MAHKKGVGSSRNGRDSQPKML.

This sequence belongs to the bacterial ribosomal protein bL27 family.

The protein is Large ribosomal subunit protein bL27 of Pelotomaculum thermopropionicum (strain DSM 13744 / JCM 10971 / SI).